The primary structure comprises 337 residues: Ketol-acid reductoisomerase (NADP(+)) (337 aa).

A KARI N-terminal Rossmann domain is found at 3-183 (IDVFYDDDAD…GGGRAGVIPT (181 aa)). NADP(+) is bound by residues 26 to 29 (YGSQ), Arg49, Ser52, Ser54, and 84 to 87 (DTSQ). Residue His109 is part of the active site. Position 135 (Gly135) interacts with NADP(+). In terms of domain architecture, KARI C-terminal knotted spans 184–329 (TFEAETVTDL…EKLRDLMSWV (146 aa)). Asp192, Glu196, Glu228, and Glu232 together coordinate Mg(2+). Ser253 contacts substrate.

This sequence belongs to the ketol-acid reductoisomerase family. Mg(2+) serves as cofactor.

The catalysed reaction is (2R)-2,3-dihydroxy-3-methylbutanoate + NADP(+) = (2S)-2-acetolactate + NADPH + H(+). The enzyme catalyses (2R,3R)-2,3-dihydroxy-3-methylpentanoate + NADP(+) = (S)-2-ethyl-2-hydroxy-3-oxobutanoate + NADPH + H(+). It participates in amino-acid biosynthesis; L-isoleucine biosynthesis; L-isoleucine from 2-oxobutanoate: step 2/4. Its pathway is amino-acid biosynthesis; L-valine biosynthesis; L-valine from pyruvate: step 2/4. Its function is as follows. Involved in the biosynthesis of branched-chain amino acids (BCAA). Catalyzes an alkyl-migration followed by a ketol-acid reduction of (S)-2-acetolactate (S2AL) to yield (R)-2,3-dihydroxy-isovalerate. In the isomerase reaction, S2AL is rearranged via a Mg-dependent methyl migration to produce 3-hydroxy-3-methyl-2-ketobutyrate (HMKB). In the reductase reaction, this 2-ketoacid undergoes a metal-dependent reduction by NADPH to yield (R)-2,3-dihydroxy-isovalerate. This chain is Ketol-acid reductoisomerase (NADP(+)), found in Corynebacterium urealyticum (strain ATCC 43042 / DSM 7109).